A 164-amino-acid chain; its full sequence is Phosphopantetheine adenylyltransferase (164 aa).

Residue Ser-9 participates in substrate binding. ATP-binding positions include 9 to 10 (SF) and His-17. Residues Lys-41, Val-78, and Arg-92 each contribute to the substrate site. ATP-binding positions include 93 to 95 (GLR), Glu-103, and 128 to 134 (SRPITAT).

This sequence belongs to the bacterial CoaD family. Homohexamer. The cofactor is Mg(2+).

Its subcellular location is the cytoplasm. It carries out the reaction (R)-4'-phosphopantetheine + ATP + H(+) = 3'-dephospho-CoA + diphosphate. Its pathway is cofactor biosynthesis; coenzyme A biosynthesis; CoA from (R)-pantothenate: step 4/5. Reversibly transfers an adenylyl group from ATP to 4'-phosphopantetheine, yielding dephospho-CoA (dPCoA) and pyrophosphate. The polypeptide is Phosphopantetheine adenylyltransferase (Rhizobium leguminosarum bv. trifolii (strain WSM2304)).